Here is a 94-residue protein sequence, read N- to C-terminus: Integration host factor subunit beta (94 aa).

This sequence belongs to the bacterial histone-like protein family. In terms of assembly, heterodimer of an alpha and a beta chain.

Its function is as follows. This protein is one of the two subunits of integration host factor, a specific DNA-binding protein that functions in genetic recombination as well as in transcriptional and translational control. This is Integration host factor subunit beta from Photorhabdus laumondii subsp. laumondii (strain DSM 15139 / CIP 105565 / TT01) (Photorhabdus luminescens subsp. laumondii).